A 121-amino-acid polypeptide reads, in one-letter code: Type II secretion system protein I (121 aa).

The propeptide at M1 to G6 is leader sequence. An N-methylmethionine modification is found at M7. The helical transmembrane segment at M7–L27 threads the bilayer.

Belongs to the GSP I family. Type II secretion is composed of four main components: the outer membrane complex, the inner membrane complex, the cytoplasmic secretion ATPase and the periplasm-spanning pseudopilus. Interacts with core component PulG. Interacts with pseudopilins PulJ and PulK. Post-translationally, cleaved by prepilin peptidase. Methylated by prepilin peptidase at the amino group of the N-terminal methionine once the leader sequence is cleaved by prepilin peptidase.

It is found in the cell inner membrane. In terms of biological role, component of the type II secretion system required for the energy-dependent secretion of extracellular factors such as proteases and toxins from the periplasm. Part of the pseudopilus tip complex that is critical for the recognition and binding of secretion substrates. The chain is Type II secretion system protein I (pulI) from Klebsiella michiganensis (strain ATCC 8724 / DSM 4798 / JCM 20051 / NBRC 3318 / NRRL B-199 / KCTC 1686 / BUCSAV 143 / CCM 1901).